The following is a 350-amino-acid chain: Ion-translocating oxidoreductase complex subunit D (350 aa).

3 helical membrane passes run 36 to 56, 89 to 109, and 124 to 144; these read CYFF…IAVA, IPAL…ILVV, and AMAA…TWVA. At T185 the chain carries FMN phosphoryl threonine. Transmembrane regions (helical) follow at residues 212–232, 239–259, 265–285, 298–318, and 319–339; these read GFGI…LVML, WQIS…GYLL, MGPL…FIAT, LIFG…CGYP, and DAFA…DYYV.

The protein belongs to the NqrB/RnfD family. As to quaternary structure, the complex is composed of six subunits: RnfA, RnfB, RnfC, RnfD, RnfE and RnfG. It depends on FMN as a cofactor.

The protein localises to the cell inner membrane. Its function is as follows. Part of a membrane-bound complex that couples electron transfer with translocation of ions across the membrane. This is Ion-translocating oxidoreductase complex subunit D from Shewanella loihica (strain ATCC BAA-1088 / PV-4).